We begin with the raw amino-acid sequence, 999 residues long: Testis anion transporter 1 (999 aa).

Topologically, residues Met-1 to Asp-93 are cytoplasmic. A helical membrane pass occupies residues Leu-94 to Leu-114. The Extracellular portion of the chain corresponds to Thr-115–Gln-117. The chain crosses the membrane as a helical span at residues Leu-118–Phe-138. Gly-139 is a topological domain (cytoplasmic). The helical transmembrane segment at Ser-140 to Leu-160 threads the bilayer. Over Lys-161 to Thr-200 the chain is Extracellular. Asn-190 carries N-linked (GlcNAc...) asparagine glycosylation. A helical transmembrane segment spans residues Phe-201–Tyr-221. Topologically, residues Leu-222–Tyr-230 are cytoplasmic. A helical membrane pass occupies residues Leu-231–Val-251. Residues Ser-252–Cys-268 are Extracellular-facing. Residues Ile-269–Leu-289 form a helical membrane-spanning segment. The Cytoplasmic segment spans residues Arg-290 to Glu-305. The helical transmembrane segment at Phe-306–Ala-326 threads the bilayer. The Extracellular segment spans residues Thr-327–Arg-354. The helical transmembrane segment at Val-355–Lys-375 threads the bilayer. Topologically, residues Lys-376 to Asp-390 are cytoplasmic. A helical membrane pass occupies residues Leu-391–Gly-411. At Ser-412–Gln-427 the chain is on the extracellular side. The helical transmembrane segment at Phe-428–Phe-448 threads the bilayer. The Cytoplasmic segment spans residues His-449 to Asn-453. A helical membrane pass occupies residues Ala-454–Leu-474. The Extracellular portion of the chain corresponds to Pro-475–Ser-494. The chain crosses the membrane as a helical span at residues Ala-495–Ile-515. The Cytoplasmic portion of the chain corresponds to Thr-516–Glu-544. Positions Asp-541 to Ala-796 constitute an STAS domain. Residues Val-545–Val-565 traverse the membrane as a helical segment. Residues Tyr-566–Pro-999 are Extracellular-facing. Residues Thr-661 to Pro-999 form an interaction with RACGAP1 region. 2 disordered regions span residues Glu-678–Leu-701 and Ser-893–Pro-999. Residues Asn-684 to Glu-696 are compositionally biased toward pro residues. Acidic residues-rich tracts occupy residues Ser-893 to Ser-903 and Glu-912 to Pro-947. Polar residues predominate over residues Gly-973–Pro-982.

Belongs to the SLC26A/SulP transporter (TC 2.A.53) family. Interacts with RACGAP1. Interacts with CFTR; stimulates anion transport activity of CFTR. In terms of processing, N-glycosylated. Expressed in testis and epididymis. Located at the end of the midpiece of the flagella, known as the annulus, in spermatozoa.

The protein localises to the membrane. It catalyses the reaction sulfate(out) + chloride(in) = sulfate(in) + chloride(out). The catalysed reaction is oxalate(in) + chloride(out) = oxalate(out) + chloride(in). In terms of biological role, antiporter that mediates the exchange of sulfate and oxalate against chloride ions across a membrane. Stimulates anion transport activity of CFTR. May cooperate with CFTR in the regulation of chloride and bicarbonate ions fluxes required for activation of the ADCY10/PKA pathway during sperm motility and sperm capacitation. May play a role in sperm tail differentiation and motility and hence male fertility. The protein is Testis anion transporter 1 of Mus musculus (Mouse).